The chain runs to 332 residues: Formamidase (332 aa).

A CN hydrolase domain is found at 14-259; the sequence is FLTALIQYPV…WEIVTAEVYP (246 aa). The active-site Proton acceptor is glutamate 60. Catalysis depends on lysine 132, which acts as the Proton donor. The Nucleophile role is filled by cysteine 165.

The protein belongs to the carbon-nitrogen hydrolase superfamily. Aliphatic amidase family.

It carries out the reaction formamide + H2O = formate + NH4(+). Its function is as follows. Is an aliphatic amidase with a restricted substrate specificity, as it only hydrolyzes formamide. The protein is Formamidase of Bacillus cereus (strain B4264).